The chain runs to 1094 residues: Protein phosphatase 2C and cyclic nucleotide-binding/kinase domain-containing protein (1094 aa).

Residues 107-397 (RCSFLSQRGY…DDITIIVVHI (291 aa)) form the PPM-type phosphatase domain. Mn(2+)-binding residues include Asp148, Gly149, Asp344, and Asp388. Residues 491–616 (LFRK…RSVD) and 617–758 (LLSR…RHSS) contribute to the a nucleoside 3',5'-cyclic phosphate site. In terms of domain architecture, Protein kinase spans 785 to 1038 (TTCLSTTDCS…PESIKKHPWF (254 aa)). ATP-binding positions include 791–799 (TDCSEIGLV) and Lys811.

In the N-terminal section; belongs to the PP2C family. This sequence in the C-terminal section; belongs to the protein kinase superfamily. AGC Ser/Thr protein kinase family. Requires Mg(2+) as cofactor. Mn(2+) is required as a cofactor.

The catalysed reaction is O-phospho-L-seryl-[protein] + H2O = L-seryl-[protein] + phosphate. The enzyme catalyses O-phospho-L-threonyl-[protein] + H2O = L-threonyl-[protein] + phosphate. This chain is Protein phosphatase 2C and cyclic nucleotide-binding/kinase domain-containing protein, found in Arabidopsis thaliana (Mouse-ear cress).